Consider the following 1405-residue polypeptide: DNA-directed RNA polymerase subunit beta' (1405 aa).

Positions 71, 73, 86, and 89 each coordinate Zn(2+). Aspartate 462, aspartate 464, and aspartate 466 together coordinate Mg(2+). Residues cysteine 810, cysteine 884, cysteine 891, and cysteine 894 each coordinate Zn(2+).

This sequence belongs to the RNA polymerase beta' chain family. As to quaternary structure, the RNAP catalytic core consists of 2 alpha, 1 beta, 1 beta' and 1 omega subunit. When a sigma factor is associated with the core the holoenzyme is formed, which can initiate transcription. It depends on Mg(2+) as a cofactor. Zn(2+) serves as cofactor.

It carries out the reaction RNA(n) + a ribonucleoside 5'-triphosphate = RNA(n+1) + diphosphate. In terms of biological role, DNA-dependent RNA polymerase catalyzes the transcription of DNA into RNA using the four ribonucleoside triphosphates as substrates. The protein is DNA-directed RNA polymerase subunit beta' of Maricaulis maris (strain MCS10) (Caulobacter maris).